The sequence spans 596 residues: Elongation factor 4 (596 aa).

The region spanning 2–183 (KNIRNFSIIA…AIITRIPAPN (182 aa)) is the tr-type G domain. Residues 14–19 (DHGKST) and 130–133 (NKID) each bind GTP.

This sequence belongs to the TRAFAC class translation factor GTPase superfamily. Classic translation factor GTPase family. LepA subfamily.

It is found in the cell inner membrane. The catalysed reaction is GTP + H2O = GDP + phosphate + H(+). Its function is as follows. Required for accurate and efficient protein synthesis under certain stress conditions. May act as a fidelity factor of the translation reaction, by catalyzing a one-codon backward translocation of tRNAs on improperly translocated ribosomes. Back-translocation proceeds from a post-translocation (POST) complex to a pre-translocation (PRE) complex, thus giving elongation factor G a second chance to translocate the tRNAs correctly. Binds to ribosomes in a GTP-dependent manner. The polypeptide is Elongation factor 4 (Campylobacter concisus (strain 13826)).